The following is a 339-amino-acid chain: MTVADPRLTDAPAHSRTSLLGRRRGGRPPRFPRAAAYVALTKPRIVELLLITTIPVMLFAAGGLPSGWLILTTFVGGALAAGCANTLNCYFDRDIDALMKRTENRPLVTGEVSPRQALVFATVLGIASTAIFVAFVNVLSAALALGAILLYVVGYTLLLKRRTSQNIVWGGVAGCMQVLIGWTAVRDSLDWAPFVLFGVIFLWTPPHYWPLSVRYREDYANAGVPMLPVVAKPTTVSRQIVLYTIAMVLCSLLLVPLGGAGVVYGAAALVLGIGFLVQTIGLHRRATRFEVETGGRDAGTLEQLKRISPMGVFHGSITYLTLLSAAVAVDPFVRVGWPF.

A disordered region spans residues 1 to 27; it reads MTVADPRLTDAPAHSRTSLLGRRRGGR. 9 consecutive transmembrane segments (helical) span residues 45-65, 67-87, 117-136, 140-159, 165-185, 191-211, 236-256, 257-277, and 309-329; these read IVEL…GGLP, GWLI…ANTL, ALVF…VAFV, SAAL…TLLL, QNIV…WTAV, WAPF…YWPL, VSRQ…LLVP, LGGA…GFLV, and PMGV…AVAV.

The protein belongs to the UbiA prenyltransferase family. Protoheme IX farnesyltransferase subfamily.

The protein resides in the cell membrane. It carries out the reaction heme b + (2E,6E)-farnesyl diphosphate + H2O = Fe(II)-heme o + diphosphate. It participates in porphyrin-containing compound metabolism; heme O biosynthesis; heme O from protoheme: step 1/1. Its function is as follows. Converts heme B (protoheme IX) to heme O by substitution of the vinyl group on carbon 2 of heme B porphyrin ring with a hydroxyethyl farnesyl side group. In Kineococcus radiotolerans (strain ATCC BAA-149 / DSM 14245 / SRS30216), this protein is Protoheme IX farnesyltransferase.